Here is a 209-residue protein sequence, read N- to C-terminus: Thiamine-phosphate synthase (209 aa).

Residues 36 to 40 (QLRDK) and N68 contribute to the 4-amino-2-methyl-5-(diphosphooxymethyl)pyrimidine site. D69 and D88 together coordinate Mg(2+). 4-amino-2-methyl-5-(diphosphooxymethyl)pyrimidine is bound at residue S107. 2-[(2R,5Z)-2-carboxy-4-methylthiazol-5(2H)-ylidene]ethyl phosphate is bound at residue 133-135 (TNS). K136 contacts 4-amino-2-methyl-5-(diphosphooxymethyl)pyrimidine. Residues G164 and 184 to 185 (IT) each bind 2-[(2R,5Z)-2-carboxy-4-methylthiazol-5(2H)-ylidene]ethyl phosphate.

Belongs to the thiamine-phosphate synthase family. Requires Mg(2+) as cofactor.

It carries out the reaction 2-[(2R,5Z)-2-carboxy-4-methylthiazol-5(2H)-ylidene]ethyl phosphate + 4-amino-2-methyl-5-(diphosphooxymethyl)pyrimidine + 2 H(+) = thiamine phosphate + CO2 + diphosphate. The enzyme catalyses 2-(2-carboxy-4-methylthiazol-5-yl)ethyl phosphate + 4-amino-2-methyl-5-(diphosphooxymethyl)pyrimidine + 2 H(+) = thiamine phosphate + CO2 + diphosphate. It catalyses the reaction 4-methyl-5-(2-phosphooxyethyl)-thiazole + 4-amino-2-methyl-5-(diphosphooxymethyl)pyrimidine + H(+) = thiamine phosphate + diphosphate. It participates in cofactor biosynthesis; thiamine diphosphate biosynthesis; thiamine phosphate from 4-amino-2-methyl-5-diphosphomethylpyrimidine and 4-methyl-5-(2-phosphoethyl)-thiazole: step 1/1. In terms of biological role, condenses 4-methyl-5-(beta-hydroxyethyl)thiazole monophosphate (THZ-P) and 2-methyl-4-amino-5-hydroxymethyl pyrimidine pyrophosphate (HMP-PP) to form thiamine monophosphate (TMP). This Shouchella clausii (strain KSM-K16) (Alkalihalobacillus clausii) protein is Thiamine-phosphate synthase.